The chain runs to 252 residues: 3-dehydroquinate dehydratase (252 aa).

Residues Ser-21, 46–48 (EWR), and Arg-82 contribute to the 3-dehydroquinate site. The Proton donor/acceptor role is filled by His-143. Lys-170 serves as the catalytic Schiff-base intermediate with substrate. Positions 213, 232, and 236 each coordinate 3-dehydroquinate.

It belongs to the type-I 3-dehydroquinase family. As to quaternary structure, homodimer.

It catalyses the reaction 3-dehydroquinate = 3-dehydroshikimate + H2O. The protein operates within metabolic intermediate biosynthesis; chorismate biosynthesis; chorismate from D-erythrose 4-phosphate and phosphoenolpyruvate: step 3/7. Involved in the third step of the chorismate pathway, which leads to the biosynthesis of aromatic amino acids. Catalyzes the cis-dehydration of 3-dehydroquinate (DHQ) and introduces the first double bond of the aromatic ring to yield 3-dehydroshikimate. In Shigella dysenteriae serotype 1 (strain Sd197), this protein is 3-dehydroquinate dehydratase.